A 141-amino-acid polypeptide reads, in one-letter code: Large ribosomal subunit protein uL11 (141 aa).

Belongs to the universal ribosomal protein uL11 family. As to quaternary structure, part of the ribosomal stalk of the 50S ribosomal subunit. Interacts with L10 and the large rRNA to form the base of the stalk. L10 forms an elongated spine to which L12 dimers bind in a sequential fashion forming a multimeric L10(L12)X complex. In terms of processing, one or more lysine residues are methylated.

Functionally, forms part of the ribosomal stalk which helps the ribosome interact with GTP-bound translation factors. This chain is Large ribosomal subunit protein uL11, found in Nostoc punctiforme (strain ATCC 29133 / PCC 73102).